Reading from the N-terminus, the 2367-residue chain is Toxin B (2367 aa).

Residues S2 to L91 are four-helical bundle. The 374-residue stretch at K96 to L469 folds into the GT44 domain. The segment at K96–L469 is glucosyltransferase region. UDP-alpha-D-glucose contacts are provided by residues I101–I103, N139, S269–R273, and D286–D288. Residues D286, D288, and E516 each contribute to the Mg(2+) site. S519–W521 contributes to the UDP-alpha-D-glucose binding site. The autoprocessing region stretch occupies residues G545–T800. Zn(2+) is bound by residues E546 and D547. Residues S568–S775 form the Peptidase C80 domain. Positions 578, 601, and 648 each coordinate 1D-myo-inositol hexakisphosphate. H654 contributes to the Zn(2+) binding site. Residue H654 is the For protease activity of the active site. Residue C699 is the Nucleophile; for protease activity of the active site. Position 758 (H758) interacts with Zn(2+). 1D-myo-inositol hexakisphosphate contacts are provided by K765, K776, and K793. Residues L801–D1501 are translocation region. 3 interaction with host frizzled receptors FZD1, FZD2 and FZD7 regions span residues L1434–A1439, S1487–N1512, and S1598–K1600. Cell wall-binding repeat units lie at residues V1833–N1852, I1854–G1873, S1876–L1895, F1926–A1945, A1946–R1965, F1967–M1986, Q1987–M2006, K2007–M2026, Y2057–A2076, V2077–E2097, S2099–M2118, Q2119–V2138, E2139–V2158, E2209–K2231, Y2233–M2252, R2253–M2272, Q2273–M2292, Y2323–A2342, and A2343–Q2362. The interval G1835–E2367 is receptor-binding (CROPS) region.

The protein belongs to the clostridial glucosylating toxin (LCGT) family. In terms of assembly, interacts with host FZD1. Interacts with host FZD2; interaction promotes toxin entry into host cell and occupies the binding site for Wnt-adducted palmitoleate in FZD2, leading to prevent Wnt-binding and downstream Wnt signaling. Interacts with host FZD7. Interacts with host CSPG4. Interacts with host NECTIN3/PVRL3. It depends on Zn(2+) as a cofactor. The cofactor is Mn(2+). Mg(2+) is required as a cofactor. In terms of processing, undergoes autocatalytic cleavage to release the N-terminal part (Glucosyltransferase TcdB), which constitutes the active part of the toxin, in the host cytosol. 1D-myo-inositol hexakisphosphate-binding (InsP6) activates the peptidase C80 domain and promotes autoprocessing.

It localises to the secreted. The protein localises to the host endosome membrane. Its subcellular location is the host cytoplasm. The protein resides in the host cytosol. It is found in the host cell membrane. It carries out the reaction L-threonyl-[protein] + UDP-alpha-D-glucose = 3-O-(alpha-D-glucosyl)-L-threonyl-[protein] + UDP + H(+). Protease activity is activated upon binding to 1D-myo-inositol hexakisphosphate (InsP6), which induces conformational reorganization. In terms of biological role, precursor of a cytotoxin that targets and disrupts the colonic epithelium, inducing the host inflammatory and innate immune responses and resulting in diarrhea and pseudomembranous colitis. TcdB constitutes the main toxin that mediates the pathology of C.difficile infection, an opportunistic pathogen that colonizes the colon when the normal gut microbiome is disrupted. Compared to TcdA, TcdB is more virulent and more important for inducing the host inflammatory and innate immune responses. This form constitutes the precursor of the toxin: it enters into host cells and mediates autoprocessing to release the active toxin (Glucosyltransferase TcdB) into the host cytosol. Targets colonic epithelia by binding to the frizzled receptors FZD1, FZD2 and FZD7, and enters host cells via clathrin-mediated endocytosis. Frizzled receptors constitute the major host receptors in the colonic epithelium, but other receptors, such as CSPG4 or NECTIN3/PVRL3, have been identified. Binding to carbohydrates and sulfated glycosaminoglycans on host cell surface also contribute to entry into cells. Once entered into host cells, acidification in the endosome promotes the membrane insertion of the translocation region and formation of a pore, leading to translocation of the GT44 and peptidase C80 domains across the endosomal membrane. This activates the peptidase C80 domain and autocatalytic processing, releasing the N-terminal part (Glucosyltransferase TcdB), which constitutes the active part of the toxin, in the cytosol. Functionally, active form of the toxin, which is released into the host cytosol following autoprocessing and inactivates small GTPases. Acts by mediating monoglucosylation of small GTPases of the Rho family (Rac1, RhoA, RhoB, RhoC, RhoG and Cdc42) in host cells at the conserved threonine residue located in the switch I region ('Thr-37/35'), using UDP-alpha-D-glucose as the sugar donor. Monoglucosylation of host small GTPases completely prevents the recognition of the downstream effector, blocking the GTPases in their inactive form, leading to actin cytoskeleton disruption and cell death, resulting in the loss of colonic epithelial barrier function. The polypeptide is Toxin B (Clostridioides difficile (Peptoclostridium difficile)).